The following is a 178-amino-acid chain: Large ribosomal subunit protein uL6 (178 aa).

The protein belongs to the universal ribosomal protein uL6 family. As to quaternary structure, part of the 50S ribosomal subunit.

This protein binds to the 23S rRNA, and is important in its secondary structure. It is located near the subunit interface in the base of the L7/L12 stalk, and near the tRNA binding site of the peptidyltransferase center. The polypeptide is Large ribosomal subunit protein uL6 (Micrococcus luteus (Micrococcus lysodeikticus)).